Here is a 201-residue protein sequence, read N- to C-terminus: Holliday junction branch migration complex subunit RuvA (201 aa).

Residues 1–63 form a domain I region; it reads MIGCLIGEVF…EDAQQLYGFI (63 aa). Positions 64–142 are domain II; the sequence is DAQEKLIFRT…ALSVQATTGS (79 aa). The flexible linker stretch occupies residues 143–152; sequence TVTSAQIQFS. Residues 152–201 form a domain III region; sequence SSNSPIAEAEAALQSLGYKPIEAQKAIAAVKADYTEAADLIRAALKSMMK.

It belongs to the RuvA family. As to quaternary structure, homotetramer. Forms an RuvA(8)-RuvB(12)-Holliday junction (HJ) complex. HJ DNA is sandwiched between 2 RuvA tetramers; dsDNA enters through RuvA and exits via RuvB. An RuvB hexamer assembles on each DNA strand where it exits the tetramer. Each RuvB hexamer is contacted by two RuvA subunits (via domain III) on 2 adjacent RuvB subunits; this complex drives branch migration. In the full resolvosome a probable DNA-RuvA(4)-RuvB(12)-RuvC(2) complex forms which resolves the HJ.

The protein localises to the cytoplasm. In terms of biological role, the RuvA-RuvB-RuvC complex processes Holliday junction (HJ) DNA during genetic recombination and DNA repair, while the RuvA-RuvB complex plays an important role in the rescue of blocked DNA replication forks via replication fork reversal (RFR). RuvA specifically binds to HJ cruciform DNA, conferring on it an open structure. The RuvB hexamer acts as an ATP-dependent pump, pulling dsDNA into and through the RuvAB complex. HJ branch migration allows RuvC to scan DNA until it finds its consensus sequence, where it cleaves and resolves the cruciform DNA. The polypeptide is Holliday junction branch migration complex subunit RuvA (Acinetobacter baylyi (strain ATCC 33305 / BD413 / ADP1)).